The primary structure comprises 508 residues: ATP synthase subunit alpha, mitochondrial (508 aa).

171-178 (GDRQTGKT) serves as a coordination point for ATP.

It belongs to the ATPase alpha/beta chains family. As to quaternary structure, F-type ATPases have 2 components, CF(1) - the catalytic core - and CF(0) - the membrane proton channel. CF(1) has five subunits: alpha(3), beta(3), gamma(1), delta(1), epsilon(1). CF(0) has three main subunits: a, b and c.

The protein resides in the mitochondrion. Its subcellular location is the mitochondrion inner membrane. Mitochondrial membrane ATP synthase (F(1)F(0) ATP synthase or Complex V) produces ATP from ADP in the presence of a proton gradient across the membrane which is generated by electron transport complexes of the respiratory chain. F-type ATPases consist of two structural domains, F(1) - containing the extramembraneous catalytic core, and F(0) - containing the membrane proton channel, linked together by a central stalk and a peripheral stalk. During catalysis, ATP synthesis in the catalytic domain of F(1) is coupled via a rotary mechanism of the central stalk subunits to proton translocation. Subunits alpha and beta form the catalytic core in F(1). Rotation of the central stalk against the surrounding alpha(3)beta(3) subunits leads to hydrolysis of ATP in three separate catalytic sites on the beta subunits. Subunit alpha does not bear the catalytic high-affinity ATP-binding sites. The sequence is that of ATP synthase subunit alpha, mitochondrial (ATPA) from Phaseolus vulgaris (Kidney bean).